Here is a 524-residue protein sequence, read N- to C-terminus: Cytochrome P450 monooxygenase ATR4 (524 aa).

A helical membrane pass occupies residues 13–36 (IITYLDSLTWVGMALPLFSLCWAI). Residues Asn-291, Asn-444, and Asn-454 are each glycosylated (N-linked (GlcNAc...) asparagine).

It belongs to the cytochrome P450 family. Heme serves as cofactor.

The protein localises to the membrane. Its pathway is mycotoxin biosynthesis. Functionally, cytochrome P450 monooxygenase; part of the core atranone cluster (CAC) which products are predicted to catalyze most or all steps of mycotoxin atranone synthesis, starting from geranylgeranyl pyrophosphate (GGPP). The initial cyclization of GGPP to dolabellane is probably performed by the terpene cyclase ATR13. The Baeyer-Villiger oxidation near the end of the atranone synthesis, which converts atranones D and E to atranones F and G is predicted to be catalyzed by the monooxygenase ATR8. Of the CAC's other predicted gene products, the reducing PKS ATR6 might synthesize a polyketide chain. This polyketide is probably transferred onto the atranone backbone by the polyketide transferase ATR5. Other predicted CAC products include 4 oxygenases (ATR2, ATR3, ATR4, and ATR14), 3 short-chain reductases (ATR7, ATR9, and ATR10), and a methyltransferase (ATR12). These may all be involved in the various steps of atranone biosynthesis, although their specific roles must await experimental determination. The protein is Cytochrome P450 monooxygenase ATR4 of Stachybotrys chlorohalonatus (strain IBT 40285).